A 300-amino-acid polypeptide reads, in one-letter code: B1 kinase (300 aa).

The region spanning 16 to 282 is the Protein kinase domain; that stretch reads WVVGPLIGKG…ITMVNSLTYF (267 aa). ATP-binding positions include 22–30 and Lys45; that span reads IGKGGFGSI. Asp147 serves as the catalytic Proton acceptor.

This sequence belongs to the protein kinase superfamily. Ser/Thr protein kinase family. Poxviruses subfamily. In terms of assembly, interacts with host JIP1; this interaction increases the amount of MAPK bound to JIP1 and subsequently increases the activity of transcription factors, such as JUN, that respond to these complexes. Interacts with protein OPG198; this interaction inhibits the repressive activity of OPG198 pseudokinase on viral replication factory formation. Mg(2+) serves as cofactor. Autophosphorylated.

The protein resides in the virion. The protein localises to the host cytoplasm. The catalysed reaction is L-seryl-[protein] + ATP = O-phospho-L-seryl-[protein] + ADP + H(+). It catalyses the reaction L-threonyl-[protein] + ATP = O-phospho-L-threonyl-[protein] + ADP + H(+). Functionally, essential serine/threonine-protein kinase that plays different role in the viral life cycle. Phosphorylates the host small ribosomal protein RACK1 thereby customizing the ribosomes to a state optimal for viral mRNAs (which contain poly-A leaders) but not for host mRNAs. Facilitates viral DNA replication by inhibiting host BANF1, a cellular host defense responsive to foreign DNA. Phosphorylates host BANF1 on serine and threonine residues; this leads to BANF1 relocalization to the cytoplasm, loss of dimerization and impaired DNA binding activity. Indeed, BANF1 activity depends on its DNA-binding property which is blocked by VPK1-mediated phosphorylation. Required for viral intermediate genes expression, probably by inhibiting host BANF1. Modulates cellular responses via host JUN by two different mechanisms, either by direct phosphorylation or by modulation of upstream JIP1-MAPK complexes. Seems to participate in the accumulation/processing of late proteins and thus in virion maturation. In addition, inhibits B12 repressive activity on viral DNA replication via a phosphorylation-dependent mechanism. In Homo sapiens (Human), this protein is B1 kinase (OPG187).